The chain runs to 522 residues: 2-isopropylmalate synthase (522 aa).

The 263-residue stretch at 5-267 (VIIFDTTLRD…HTRINHQEIY (263 aa)) folds into the Pyruvate carboxyltransferase domain. Asp14, His202, His204, and Asn238 together coordinate Mn(2+). A regulatory domain region spans residues 392-522 (RLDTFNVQSG…SQVKDQKETV (131 aa)).

Belongs to the alpha-IPM synthase/homocitrate synthase family. LeuA type 1 subfamily. As to quaternary structure, homodimer. Requires Mn(2+) as cofactor.

The protein resides in the cytoplasm. The enzyme catalyses 3-methyl-2-oxobutanoate + acetyl-CoA + H2O = (2S)-2-isopropylmalate + CoA + H(+). Its pathway is amino-acid biosynthesis; L-leucine biosynthesis; L-leucine from 3-methyl-2-oxobutanoate: step 1/4. Its function is as follows. Catalyzes the condensation of the acetyl group of acetyl-CoA with 3-methyl-2-oxobutanoate (2-ketoisovalerate) to form 3-carboxy-3-hydroxy-4-methylpentanoate (2-isopropylmalate). The protein is 2-isopropylmalate synthase of Erwinia tasmaniensis (strain DSM 17950 / CFBP 7177 / CIP 109463 / NCPPB 4357 / Et1/99).